The chain runs to 432 residues: Enolase (432 aa).

Position 167 (Gln-167) interacts with (2R)-2-phosphoglycerate. Glu-209 (proton donor) is an active-site residue. 3 residues coordinate Mg(2+): Asp-246, Glu-287, and Asp-314. (2R)-2-phosphoglycerate-binding residues include Lys-339, Arg-368, Ser-369, and Lys-390. Lys-339 acts as the Proton acceptor in catalysis.

Belongs to the enolase family. The cofactor is Mg(2+).

It is found in the cytoplasm. Its subcellular location is the secreted. The protein localises to the cell surface. The enzyme catalyses (2R)-2-phosphoglycerate = phosphoenolpyruvate + H2O. The protein operates within carbohydrate degradation; glycolysis; pyruvate from D-glyceraldehyde 3-phosphate: step 4/5. Its function is as follows. Catalyzes the reversible conversion of 2-phosphoglycerate (2-PG) into phosphoenolpyruvate (PEP). It is essential for the degradation of carbohydrates via glycolysis. The chain is Enolase from Prochlorococcus marinus (strain MIT 9211).